The chain runs to 343 residues: Type II restriction enzyme BsuMI component YdiS (343 aa).

As to quaternary structure, bsuMI restriction activity requires YdiR, YdiS and YdjA.

The catalysed reaction is Endonucleolytic cleavage of DNA to give specific double-stranded fragments with terminal 5'-phosphates.. In terms of biological role, a P subtype restriction enzyme that recognizes the double-stranded sequence 5'-CTCGAG-3'; the cleavage site is unknown. This chain is Type II restriction enzyme BsuMI component YdiS (ydiS), found in Bacillus subtilis (strain 168).